The following is a 354-amino-acid chain: Holliday junction branch migration complex subunit RuvB (354 aa).

Residues 1-183 (MTGDNLVSAY…FGFVAHLDFY (183 aa)) are large ATPase domain (RuvB-L). ATP is bound by residues arginine 23, glycine 64, lysine 67, threonine 68, serine 69, 130 to 132 (EDF), arginine 173, tyrosine 183, and arginine 220. Threonine 68 contacts Mg(2+). Positions 184–254 (SPADLETLLH…AARAALLVYD (71 aa)) are small ATPAse domain (RuvB-S). The head domain (RuvB-H) stretch occupies residues 257-354 (ALGLDRLDRQ…DLFSVEPDQP (98 aa)). Arginine 312 and arginine 317 together coordinate DNA. The tract at residues 330-354 (TPPNGIFGSDAPPASDLFSVEPDQP) is disordered.

It belongs to the RuvB family. In terms of assembly, homohexamer. Forms an RuvA(8)-RuvB(12)-Holliday junction (HJ) complex. HJ DNA is sandwiched between 2 RuvA tetramers; dsDNA enters through RuvA and exits via RuvB. An RuvB hexamer assembles on each DNA strand where it exits the tetramer. Each RuvB hexamer is contacted by two RuvA subunits (via domain III) on 2 adjacent RuvB subunits; this complex drives branch migration. In the full resolvosome a probable DNA-RuvA(4)-RuvB(12)-RuvC(2) complex forms which resolves the HJ.

It localises to the cytoplasm. It catalyses the reaction ATP + H2O = ADP + phosphate + H(+). In terms of biological role, the RuvA-RuvB-RuvC complex processes Holliday junction (HJ) DNA during genetic recombination and DNA repair, while the RuvA-RuvB complex plays an important role in the rescue of blocked DNA replication forks via replication fork reversal (RFR). RuvA specifically binds to HJ cruciform DNA, conferring on it an open structure. The RuvB hexamer acts as an ATP-dependent pump, pulling dsDNA into and through the RuvAB complex. RuvB forms 2 homohexamers on either side of HJ DNA bound by 1 or 2 RuvA tetramers; 4 subunits per hexamer contact DNA at a time. Coordinated motions by a converter formed by DNA-disengaged RuvB subunits stimulates ATP hydrolysis and nucleotide exchange. Immobilization of the converter enables RuvB to convert the ATP-contained energy into a lever motion, pulling 2 nucleotides of DNA out of the RuvA tetramer per ATP hydrolyzed, thus driving DNA branch migration. The RuvB motors rotate together with the DNA substrate, which together with the progressing nucleotide cycle form the mechanistic basis for DNA recombination by continuous HJ branch migration. Branch migration allows RuvC to scan DNA until it finds its consensus sequence, where it cleaves and resolves cruciform DNA. In Salinispora arenicola (strain CNS-205), this protein is Holliday junction branch migration complex subunit RuvB.